Consider the following 1343-residue polypeptide: Xanthine dehydrogenase (1343 aa).

The 2Fe-2S ferredoxin-type domain occupies 8–95 (SELVFFVNGK…GCAVTTVEGI (88 aa)). Positions 47, 52, 55, 77, 117, 120, 152, and 154 each coordinate [2Fe-2S] cluster. The 190-residue stretch at 235 to 424 (FSSERVTWYR…LGIHFQKTTP (190 aa)) folds into the FAD-binding PCMH-type domain. FAD is bound by residues 263–270 (LVVGNTEV), phenylalanine 343, 353–357 (CLGGN), aspartate 366, leucine 414, and lysine 432. Mo-molybdopterin contacts are provided by glutamine 780 and phenylalanine 811. Substrate contacts are provided by glutamate 815 and arginine 893. Arginine 925 contributes to the Mo-molybdopterin binding site. Phenylalanine 927 is a substrate binding site. Alanine 1092 is a Mo-molybdopterin binding site. Glutamate 1275 functions as the Proton acceptor in the catalytic mechanism.

This sequence belongs to the xanthine dehydrogenase family. As to quaternary structure, homodimer. FAD is required as a cofactor. Requires Mo-molybdopterin as cofactor. [2Fe-2S] cluster serves as cofactor.

It localises to the peroxisome. It catalyses the reaction xanthine + NAD(+) + H2O = urate + NADH + H(+). The catalysed reaction is hypoxanthine + NAD(+) + H2O = xanthine + NADH + H(+). Key enzyme in purine degradation. Catalyzes the oxidation of hypoxanthine to xanthine. Catalyzes the oxidation of xanthine to uric acid. The sequence is that of Xanthine dehydrogenase (ry) from Drosophila pseudoobscura pseudoobscura (Fruit fly).